The primary structure comprises 388 residues: Phosphopentomutase (388 aa).

The Mn(2+) site is built by Asp11, Asp283, His288, Asp324, His325, and His336.

Belongs to the phosphopentomutase family. Mn(2+) serves as cofactor.

The protein resides in the cytoplasm. It carries out the reaction 2-deoxy-alpha-D-ribose 1-phosphate = 2-deoxy-D-ribose 5-phosphate. The enzyme catalyses alpha-D-ribose 1-phosphate = D-ribose 5-phosphate. The protein operates within carbohydrate degradation; 2-deoxy-D-ribose 1-phosphate degradation; D-glyceraldehyde 3-phosphate and acetaldehyde from 2-deoxy-alpha-D-ribose 1-phosphate: step 1/2. Functionally, isomerase that catalyzes the conversion of deoxy-ribose 1-phosphate (dRib-1-P) and ribose 1-phosphate (Rib-1-P) to deoxy-ribose 5-phosphate (dRib-5-P) and ribose 5-phosphate (Rib-5-P), respectively. The polypeptide is Phosphopentomutase (Anaeromyxobacter dehalogenans (strain 2CP-1 / ATCC BAA-258)).